A 421-amino-acid chain; its full sequence is Serine hydroxymethyltransferase (421 aa).

(6S)-5,6,7,8-tetrahydrofolate is bound by residues leucine 121 and 125-127 (GHL). Lysine 230 is subject to N6-(pyridoxal phosphate)lysine.

Belongs to the SHMT family. In terms of assembly, homodimer. The cofactor is pyridoxal 5'-phosphate.

The protein localises to the cytoplasm. The catalysed reaction is (6R)-5,10-methylene-5,6,7,8-tetrahydrofolate + glycine + H2O = (6S)-5,6,7,8-tetrahydrofolate + L-serine. Its pathway is one-carbon metabolism; tetrahydrofolate interconversion. It participates in amino-acid biosynthesis; glycine biosynthesis; glycine from L-serine: step 1/1. Catalyzes the reversible interconversion of serine and glycine with tetrahydrofolate (THF) serving as the one-carbon carrier. This reaction serves as the major source of one-carbon groups required for the biosynthesis of purines, thymidylate, methionine, and other important biomolecules. Also exhibits THF-independent aldolase activity toward beta-hydroxyamino acids, producing glycine and aldehydes, via a retro-aldol mechanism. The chain is Serine hydroxymethyltransferase from Carboxydothermus hydrogenoformans (strain ATCC BAA-161 / DSM 6008 / Z-2901).